The sequence spans 513 residues: Solute carrier family 2, facilitated glucose transporter member 7 (513 aa).

The Cytoplasmic segment spans residues 1–21 (MEDKEIGTPLPLPHSEARLQP). A helical transmembrane segment spans residues 22 to 42 (TLVLTTLSAAFGSVFQYGYNI). The Extracellular segment spans residues 43–78 (AVINTPHKVFKSFYNDTHFERHGTFMDESTLLLLWS). Residue N57 is glycosylated (N-linked (GlcNAc...) asparagine). A helical membrane pass occupies residues 79–99 (CTVSMFPLGGLLGSLVVGLMV). Over 100–107 (NKWGRKGT) the chain is Cytoplasmic. Residues 108 to 128 (LLINNVFAITSAVLMGVSKVA) form a helical membrane-spanning segment. Over 129-138 (RAFELIILSR) the chain is Extracellular. Residues 139–159 (VLVGICAGIAYSTLPMYLGEL) traverse the membrane as a helical segment. The Cytoplasmic segment spans residues 160-172 (APQNLRGALGTMT). Residues 173–193 (EVFVIIGVLLAQIFSLQAILG) form a helical membrane-spanning segment. At 194 to 198 (NATGW) the chain is on the extracellular side. The chain crosses the membrane as a helical span at residues 199–219 (PILLALTGVPAVIQLLSLPFF). Residues 220-282 (PESPRYTLIE…LNLFTFRPLR (63 aa)) lie on the Cytoplasmic side of the membrane. The chain crosses the membrane as a helical span at residues 283 to 303 (WQLISIVVLMAGQQLSGINAV). D-glucose-binding positions include 295–296 (QQ) and N301. Topologically, residues 304–322 (NYYADVIYTSAGVDPTQSQ) are extracellular. The helical transmembrane segment at 323-343 (YVTLGSGVINLVMTLVSAVII) threads the bilayer. Residue N332 participates in D-glucose binding. The Cytoplasmic segment spans residues 344–351 (ERLGRRIL). A helical transmembrane segment spans residues 352-372 (LLSGYAICCSACLVLTVALLL). The Extracellular portion of the chain corresponds to 373-380 (QSTAPELS). Residues 381–401 (YLSIVCVFSYIVGHSIGPSPV) form a helical membrane-spanning segment. Over 402–416 (PSVVRTEIVLQSSRT) the chain is Cytoplasmic. A helical transmembrane segment spans residues 417 to 437 (AAFTVDGAVHWLTNFIVGLTF). The Extracellular portion of the chain corresponds to 438–446 (PSIQVAIGA). A helical transmembrane segment spans residues 447-467 (YSFLVFAGVCILTAAYIYVVI). Residues 468–513 (PETKGRTFVEINCAFAKRNGVEFPEEKEVATAKPHTPSLPTKETAF) are Cytoplasmic-facing. The tract at residues 494 to 513 (KEVATAKPHTPSLPTKETAF) is disordered.

Belongs to the major facilitator superfamily. Sugar transporter (TC 2.A.1.1) family. Glucose transporter subfamily.

Its subcellular location is the cell membrane. The protein localises to the apical cell membrane. The catalysed reaction is D-glucose(out) = D-glucose(in). It carries out the reaction D-fructose(out) = D-fructose(in). Functionally, probable sugar transporter. Even if its physiological substrate is subject to discussion, it is able to transport glucose and fructose. Does not transport galactose, 2-deoxy-d-glucose and xylose. The sequence is that of Solute carrier family 2, facilitated glucose transporter member 7 from Mus musculus (Mouse).